Here is a 987-residue protein sequence, read N- to C-terminus: Ephrin type-B receptor 4 (987 aa).

A signal peptide spans methionine 1–alanine 15. The Extracellular segment spans residues leucine 16–alanine 539. The region spanning glutamate 17–threonine 202 is the Eph LBD domain. 2 disulfides stabilise this stretch: cysteine 61–cysteine 184 and cysteine 97–cysteine 107. Asparagine 203, asparagine 335, and asparagine 426 each carry an N-linked (GlcNAc...) asparagine glycan. Fibronectin type-III domains lie at proline 323–glutamate 432 and alanine 436–aspartate 529. Residues leucine 540–valine 560 traverse the membrane as a helical segment. The Cytoplasmic portion of the chain corresponds to leucine 561–phenylalanine 987. In terms of domain architecture, Protein kinase spans valine 615–leucine 899. Residues isoleucine 621–valine 629 and lysine 647 each bind ATP. Aspartate 740 serves as the catalytic Proton acceptor. Phosphoserine occurs at positions 769, 770, 911, and 943. The SAM domain occupies serine 907–glutamine 971. The tract at residues valine 965–phenylalanine 987 is disordered. Over residues alanine 976–phenylalanine 987 the composition is skewed to gly residues. Positions glutamine 985–phenylalanine 987 match the PDZ-binding motif.

It belongs to the protein kinase superfamily. Tyr protein kinase family. Ephrin receptor subfamily. As to quaternary structure, heterotetramer upon binding of the ligand. The heterotetramer is composed of an ephrin dimer and a receptor dimer. Oligomerization is probably required to induce biological responses. Interacts with RASA1; the interaction depends on EPHB4 tyrosine-phosphorylation. In terms of processing, phosphorylated; autophosphorylation is stimulated by EFNB2. In terms of tissue distribution, expressed in various organ systems, including lung, liver, kidney, intestine, muscle and heart. Expressed in myogenic progenitor cells.

It localises to the cell membrane. The enzyme catalyses L-tyrosyl-[protein] + ATP = O-phospho-L-tyrosyl-[protein] + ADP + H(+). Functionally, receptor tyrosine kinase which binds promiscuously transmembrane ephrin-B family ligands residing on adjacent cells, leading to contact-dependent bidirectional signaling into neighboring cells. The signaling pathway downstream of the receptor is referred to as forward signaling while the signaling pathway downstream of the ephrin ligand is referred to as reverse signaling. Together with its cognate ligand/functional ligand EFNB2 it is involved in the regulation of cell adhesion and migration, and plays a central role in heart morphogenesis, angiogenesis and blood vessel remodeling and permeability. EPHB4-mediated forward signaling controls cellular repulsion and segregation from EFNB2-expressing cells. The sequence is that of Ephrin type-B receptor 4 (Ephb4) from Mus musculus (Mouse).